Consider the following 360-residue polypeptide: Tyrosine-protein phosphatase non-receptor type 7 (360 aa).

The interval 1-37 (MVQAHGGRSRAQPLTLSLGAAMTQPPPEKTPAKKHVR) is disordered. Positions 38 to 51 (LQERRGSNVALMLD) are interaction with MAP kinases. Ser-44 carries the post-translational modification Phosphoserine. A Phosphothreonine modification is found at Thr-66. 3 positions are modified to phosphoserine: Ser-93, Ser-110, and Ser-143. Residues 97 to 350 (LEEEFLKIPS…QFLHHTLALY (254 aa)) form the Tyrosine-protein phosphatase domain. Substrate-binding positions include Asp-257, 291 to 297 (CSAGIGR), and Gln-335. The active-site Phosphocysteine intermediate is the Cys-291. A Cysteine sulfenic acid (-SOH) modification is found at Cys-291.

The protein belongs to the protein-tyrosine phosphatase family. Non-receptor class subfamily. Monomer. Interacts with MAPK1, MAPK3 and several other MAP kinases. Phosphorylated on serine residues in resting T-cells. Phosphorylation increases upon exposure to stimuli that increase intracellular cAMP levels. Phosphorylation leads to dissociation of bound MAP kinases. In terms of processing, oxidized at active site cysteine. Treatment with pervanadate (vanadate and H(2)O(2)) or with antigen enhanced oxidation of active site cysteine. Expressed exclusively in thymus and spleen.

Its subcellular location is the cytoplasm. It localises to the cytoskeleton. The catalysed reaction is O-phospho-L-tyrosyl-[protein] + H2O = L-tyrosyl-[protein] + phosphate. Inhibited in cells after FCER1A triggering. Functionally, protein phosphatase that acts preferentially on tyrosine-phosphorylated MAPK1. Plays a role in the regulation of T and B-lymphocyte development and signal transduction. In Homo sapiens (Human), this protein is Tyrosine-protein phosphatase non-receptor type 7 (PTPN7).